Reading from the N-terminus, the 130-residue chain is Phosphoribosyl-AMP cyclohydrolase (130 aa).

D77 is a binding site for Mg(2+). C78 is a binding site for Zn(2+). The Mg(2+) site is built by D79 and D81. Residues C95 and C102 each contribute to the Zn(2+) site.

The protein belongs to the PRA-CH family. Homodimer. The cofactor is Mg(2+). Zn(2+) serves as cofactor.

It localises to the cytoplasm. The enzyme catalyses 1-(5-phospho-beta-D-ribosyl)-5'-AMP + H2O = 1-(5-phospho-beta-D-ribosyl)-5-[(5-phospho-beta-D-ribosylamino)methylideneamino]imidazole-4-carboxamide. It functions in the pathway amino-acid biosynthesis; L-histidine biosynthesis; L-histidine from 5-phospho-alpha-D-ribose 1-diphosphate: step 3/9. Its function is as follows. Catalyzes the hydrolysis of the adenine ring of phosphoribosyl-AMP. The polypeptide is Phosphoribosyl-AMP cyclohydrolase (Pseudomonas syringae pv. syringae (strain B728a)).